Here is a 413-residue protein sequence, read N- to C-terminus: Probable protein S-acyltransferase 3 (413 aa).

The next 2 helical transmembrane spans lie at 65-85 (LTSF…LVWI) and 96-116 (VLAS…LTSA). In terms of domain architecture, DHHC spans 171-221 (KFCDTCLLYRPPRASHCSICNNCVQRFDHHCPWVGQCIARRNYPFFICFIS). Residue cysteine 201 is the S-palmitoyl cysteine intermediate of the active site. Helical transmembrane passes span 216-236 (FICF…FSWI) and 255-275 (SVIL…LTIF). Residues 364–413 (RDSPRKLPLPTRNLDDIKDISDNYDRSTTTREDASDRDPSFFSSQLDLPK) form a disordered region. Basic and acidic residues predominate over residues 376–402 (NLDDIKDISDNYDRSTTTREDASDRDP). Over residues 404–413 (FFSSQLDLPK) the composition is skewed to polar residues.

Belongs to the DHHC palmitoyltransferase family. Expressed in flowers and pollen.

The protein resides in the endoplasmic reticulum membrane. It is found in the cytoplasmic vesicle membrane. It carries out the reaction L-cysteinyl-[protein] + hexadecanoyl-CoA = S-hexadecanoyl-L-cysteinyl-[protein] + CoA. Its function is as follows. Palmitoyl acyltransferase. In Arabidopsis thaliana (Mouse-ear cress), this protein is Probable protein S-acyltransferase 3 (PAT03).